We begin with the raw amino-acid sequence, 292 residues long: S-methyl-5'-thioadenosine phosphorylase (292 aa).

Residues serine 11, 53–54, and 86–87 each bind phosphate; these read RH and SA. Methionine 184 is a substrate binding site. Threonine 185 lines the phosphate pocket. Substrate is bound at residue 208 to 210; sequence DYD.

Belongs to the PNP/MTAP phosphorylase family. MTAP subfamily. In terms of assembly, homohexamer. Dimer of a homotrimer.

It carries out the reaction S-methyl-5'-thioadenosine + phosphate = 5-(methylsulfanyl)-alpha-D-ribose 1-phosphate + adenine. It participates in amino-acid biosynthesis; L-methionine biosynthesis via salvage pathway; S-methyl-5-thio-alpha-D-ribose 1-phosphate from S-methyl-5'-thioadenosine (phosphorylase route): step 1/1. In terms of biological role, catalyzes the reversible phosphorylation of S-methyl-5'-thioadenosine (MTA) to adenine and 5-methylthioribose-1-phosphate. Involved in the breakdown of MTA, a major by-product of polyamine biosynthesis. Responsible for the first step in the methionine salvage pathway after MTA has been generated from S-adenosylmethionine. Has broad substrate specificity with 6-aminopurine nucleosides as preferred substrates. The chain is S-methyl-5'-thioadenosine phosphorylase from Koribacter versatilis (strain Ellin345).